Consider the following 363-residue polypeptide: NAD(P)H-quinone oxidoreductase subunit 1, chloroplastic (363 aa).

A run of 8 helical transmembrane segments spans residues 27 to 47 (LIPILIILLGATLGVLVIVWL), 93 to 113 (WLFSVGPALVVVPVFLSYLVV), 124 to 144 (LGVGILFWIALSSIAPLGLLM), 162 to 182 (AAQAISYEIPLALCVLSVALL), 200 to 220 (ILGWNIWRQPIGFIAFLIASL), 250 to 270 (FGLFYVGSYLNLLVSALFVSV), 303 to 323 (ATLGIAITLGKAYLFLFLSIL), and 343 to 363 (FLLPVSLGNLLLTASLQLALL).

This sequence belongs to the complex I subunit 1 family. In terms of assembly, NDH is composed of at least 16 different subunits, 5 of which are encoded in the nucleus.

The protein resides in the plastid. Its subcellular location is the chloroplast thylakoid membrane. It catalyses the reaction a plastoquinone + NADH + (n+1) H(+)(in) = a plastoquinol + NAD(+) + n H(+)(out). The enzyme catalyses a plastoquinone + NADPH + (n+1) H(+)(in) = a plastoquinol + NADP(+) + n H(+)(out). Its function is as follows. NDH shuttles electrons from NAD(P)H:plastoquinone, via FMN and iron-sulfur (Fe-S) centers, to quinones in the photosynthetic chain and possibly in a chloroplast respiratory chain. The immediate electron acceptor for the enzyme in this species is believed to be plastoquinone. Couples the redox reaction to proton translocation, and thus conserves the redox energy in a proton gradient. This chain is NAD(P)H-quinone oxidoreductase subunit 1, chloroplastic, found in Chaetosphaeridium globosum (Charophycean green alga).